A 513-amino-acid polypeptide reads, in one-letter code: ATP synthase subunit alpha (513 aa).

An ATP-binding site is contributed by 169–176; the sequence is GDRQTGKT.

This sequence belongs to the ATPase alpha/beta chains family. In terms of assembly, F-type ATPases have 2 components, CF(1) - the catalytic core - and CF(0) - the membrane proton channel. CF(1) has five subunits: alpha(3), beta(3), gamma(1), delta(1), epsilon(1). CF(0) has three main subunits: a(1), b(2) and c(9-12). The alpha and beta chains form an alternating ring which encloses part of the gamma chain. CF(1) is attached to CF(0) by a central stalk formed by the gamma and epsilon chains, while a peripheral stalk is formed by the delta and b chains.

It localises to the cell inner membrane. It carries out the reaction ATP + H2O + 4 H(+)(in) = ADP + phosphate + 5 H(+)(out). In terms of biological role, produces ATP from ADP in the presence of a proton gradient across the membrane. The alpha chain is a regulatory subunit. The polypeptide is ATP synthase subunit alpha (Yersinia pseudotuberculosis serotype O:1b (strain IP 31758)).